We begin with the raw amino-acid sequence, 252 residues long: 5'-nucleotidase SurE (252 aa).

The a divalent metal cation site is built by Asp8, Asp9, Ser39, and Asn91.

The protein belongs to the SurE nucleotidase family. It depends on a divalent metal cation as a cofactor.

The protein resides in the cytoplasm. It carries out the reaction a ribonucleoside 5'-phosphate + H2O = a ribonucleoside + phosphate. Nucleotidase that shows phosphatase activity on nucleoside 5'-monophosphates. This chain is 5'-nucleotidase SurE, found in Legionella pneumophila (strain Corby).